Here is a 435-residue protein sequence, read N- to C-terminus: 3-phosphoshikimate 1-carboxyvinyltransferase (435 aa).

3-phosphoshikimate-binding residues include K22, S23, and R27. Residue K22 coordinates phosphoenolpyruvate. Phosphoenolpyruvate contacts are provided by G94 and R122. 3-phosphoshikimate is bound by residues S166, Q168, D314, and K341. Residue Q168 participates in phosphoenolpyruvate binding. The Proton acceptor role is filled by D314. Phosphoenolpyruvate is bound by residues R345 and R388.

The protein belongs to the EPSP synthase family. As to quaternary structure, monomer.

It localises to the cytoplasm. The catalysed reaction is 3-phosphoshikimate + phosphoenolpyruvate = 5-O-(1-carboxyvinyl)-3-phosphoshikimate + phosphate. The protein operates within metabolic intermediate biosynthesis; chorismate biosynthesis; chorismate from D-erythrose 4-phosphate and phosphoenolpyruvate: step 6/7. Its function is as follows. Catalyzes the transfer of the enolpyruvyl moiety of phosphoenolpyruvate (PEP) to the 5-hydroxyl of shikimate-3-phosphate (S3P) to produce enolpyruvyl shikimate-3-phosphate and inorganic phosphate. The sequence is that of 3-phosphoshikimate 1-carboxyvinyltransferase from Vesicomyosocius okutanii subsp. Calyptogena okutanii (strain HA).